An 870-amino-acid chain; its full sequence is Radial spoke head 10 homolog B2 (870 aa).

Positions 1–16 are enriched in basic and acidic residues; the sequence is MVKEKKKADKKGEKSA. The disordered stretch occupies residues 1–44; sequence MVKEKKKADKKGEKSARSPSSLSDNLDFSKQDGNTTRQEMSPAG. Residues 17 to 39 are compositionally biased toward polar residues; sequence RSPSSLSDNLDFSKQDGNTTRQE. MORN repeat units follow at residues 86 to 108, 109 to 131, 132 to 154, 155 to 177, 179 to 201, 204 to 226, 227 to 249, 251 to 273, 284 to 306, and 307 to 329; these read YEGE…GGCT, YRGM…DGLK, YEGD…DGSM, YEGE…TQPV, YIGH…QEGT, YEGD…SGNI, YEGQ…TTNE, YTGR…LKRI, YIGE…SGAM, and YDGE…NGRV. A disordered region spans residues 674–704; sequence NKSPSAVMSHESDAAHSDSARSSSSKLELSP. Basic and acidic residues predominate over residues 683–692; that stretch reads HESDAAHSDS. The span at 693–703 shows a compositional bias: low complexity; the sequence is ARSSSSKLELS. A coiled-coil region spans residues 784–811; sequence KEKIRADRLRSTAQAQQRKMEDDELEAR. The disordered stretch occupies residues 840-870; the sequence is VSSSHLILDPPKEDVTVSPSSKTITSKKKKK.

Interacts with RSPH6A. Does not appear to be part of the axonemal radial spoke complexes 1 or 2.

It is found in the cytoplasm. The protein localises to the cytoskeleton. It localises to the cilium axoneme. The protein resides in the cell projection. Its subcellular location is the cilium. It is found in the flagellum. May function as part of the axonemal radial spoke complex 3 (RS3). Radial spoke complexes are important for ciliary motility. This Homo sapiens (Human) protein is Radial spoke head 10 homolog B2 (RSPH10B2).